Here is a 207-residue protein sequence, read N- to C-terminus: Transcription antitermination protein NusB (207 aa).

It belongs to the NusB family.

Its function is as follows. Involved in transcription antitermination. Required for transcription of ribosomal RNA (rRNA) genes. Binds specifically to the boxA antiterminator sequence of the ribosomal RNA (rrn) operons. The chain is Transcription antitermination protein NusB from Trichodesmium erythraeum (strain IMS101).